The primary structure comprises 274 residues: Shikimate dehydrogenase (NADP(+)) (274 aa).

Shikimate is bound by residues serine 14–serine 16 and threonine 61. Catalysis depends on lysine 65, which acts as the Proton acceptor. The shikimate site is built by asparagine 86 and aspartate 102. NADP(+) contacts are provided by residues glycine 126 to alanine 130, asparagine 150 to lysine 155, and methionine 214. Tyrosine 216 serves as a coordination point for shikimate. NADP(+) is bound at residue glycine 239.

It belongs to the shikimate dehydrogenase family. In terms of assembly, homodimer.

The enzyme catalyses shikimate + NADP(+) = 3-dehydroshikimate + NADPH + H(+). Its pathway is metabolic intermediate biosynthesis; chorismate biosynthesis; chorismate from D-erythrose 4-phosphate and phosphoenolpyruvate: step 4/7. In terms of biological role, involved in the biosynthesis of the chorismate, which leads to the biosynthesis of aromatic amino acids. Catalyzes the reversible NADPH linked reduction of 3-dehydroshikimate (DHSA) to yield shikimate (SA). This Pseudoalteromonas translucida (strain TAC 125) protein is Shikimate dehydrogenase (NADP(+)).